The chain runs to 319 residues: Probable acyltransferase (319 aa).

The region spanning asparagine 46–glycine 301 is the AB hydrolase-1 domain. Aspartate 269 is a catalytic residue.

Belongs to the AB hydrolase superfamily. MetX family. Homodimer.

The protein resides in the cytoplasm. This chain is Probable acyltransferase (metX), found in Methanothermobacter thermautotrophicus (strain ATCC 29096 / DSM 1053 / JCM 10044 / NBRC 100330 / Delta H) (Methanobacterium thermoautotrophicum).